Here is a 290-residue protein sequence, read N- to C-terminus: uncharacterized protein (290 aa).

Disordered regions lie at residues 89 to 157 (CSEN…EELS), 172 to 217 (MANT…MESS), and 261 to 290 (TANTPPTVVHVSKPSSETSVSIPPSSAVKK). 2 stretches are compositionally biased toward basic and acidic residues: residues 106-124 (DFSKTTVDETIKEKSEKQP) and 142-152 (KTEKLVSKEPS). Polar residues-rich tracts occupy residues 172–183 (MANTSSSANRTG) and 193–202 (KPTTAVQAST). Composition is skewed to low complexity over residues 207–217 (MSSAESAMESS) and 274–290 (PSSETSVSIPPSSAVKK).

This is an uncharacterized protein from Caenorhabditis elegans.